A 194-amino-acid polypeptide reads, in one-letter code: Thymidine kinase (194 aa).

ATP-binding positions include 15 to 22 (GCMFSGKT) and 88 to 91 (DELH). Glutamate 89 serves as the catalytic Proton acceptor. Residues cysteine 148, cysteine 151, cysteine 186, and cysteine 189 each contribute to the Zn(2+) site.

This sequence belongs to the thymidine kinase family. Homotetramer.

The protein resides in the cytoplasm. It carries out the reaction thymidine + ATP = dTMP + ADP + H(+). This is Thymidine kinase from Roseiflexus castenholzii (strain DSM 13941 / HLO8).